Consider the following 432-residue polypeptide: Trigger factor (432 aa).

The PPIase FKBP-type domain occupies 161 to 246; it reads DDRVTIDFVG…LKKIENMVLP (86 aa).

This sequence belongs to the FKBP-type PPIase family. Tig subfamily.

The protein resides in the cytoplasm. It carries out the reaction [protein]-peptidylproline (omega=180) = [protein]-peptidylproline (omega=0). Functionally, involved in protein export. Acts as a chaperone by maintaining the newly synthesized protein in an open conformation. Functions as a peptidyl-prolyl cis-trans isomerase. This is Trigger factor (tig) from Haemophilus influenzae (strain ATCC 51907 / DSM 11121 / KW20 / Rd).